We begin with the raw amino-acid sequence, 111 residues long: Small ribosomal subunit protein bS16 (111 aa).

The protein belongs to the bacterial ribosomal protein bS16 family.

This is Small ribosomal subunit protein bS16 from Rickettsia prowazekii (strain Madrid E).